The chain runs to 324 residues: Mitochondrial oxaloacetate transport protein (324 aa).

3 Solcar repeats span residues isoleucine 20 to serine 111, glutamine 126 to isoleucine 218, and aspartate 227 to leucine 312. 6 consecutive transmembrane segments (helical) span residues phenylalanine 26 to isoleucine 46, glycine 79 to glycine 99, valine 132 to valine 152, glycine 193 to asparagine 213, leucine 233 to isoleucine 253, and leucine 284 to phenylalanine 305.

It belongs to the mitochondrial carrier (TC 2.A.29) family.

It is found in the mitochondrion inner membrane. The catalysed reaction is a dicarboxylate(in) + sulfate(out) = a dicarboxylate(out) + sulfate(in). The enzyme catalyses (2S)-2-isopropylmalate(in) + sulfate(out) = (2S)-2-isopropylmalate(out) + sulfate(in). It carries out the reaction (2R,3S)-3-isopropylmalate(in) + sulfate(out) = (2R,3S)-3-isopropylmalate(out) + sulfate(in). It catalyses the reaction malonate(in) + sulfate(out) = malonate(out) + sulfate(in). The catalysed reaction is oxaloacetate(in) + sulfate(out) = oxaloacetate(out) + sulfate(in). The enzyme catalyses thiosulfate(in) + sulfate(out) = thiosulfate(out) + sulfate(in). With respect to regulation, inhibited by alpha-keto isocaproate, an intermediate of leucine biosynthesis pathway. Functionally, antiporter that exchanges dicarboxylates and sulfur oxoanions across the inner membrane of mitochondria. Exports alpha-isopropylmalate from mitochondrial matrix to the cytosol, where it serves as a precursor for leucine biosynthesis. The chain is Mitochondrial oxaloacetate transport protein (OAC1) from Saccharomyces cerevisiae (strain ATCC 204508 / S288c) (Baker's yeast).